We begin with the raw amino-acid sequence, 49 residues long: U-theraphotoxin-Lk2a (49 aa).

4 disulfides stabilise this stretch: cysteine 4–cysteine 17, cysteine 8–cysteine 41, cysteine 22–cysteine 24, and cysteine 35–cysteine 46.

The protein belongs to the neurotoxin 12 (Hwtx-2) family. 04 (lasiotoxin) subfamily. Expressed by the venom gland.

It localises to the secreted. Toxin that causes irreversible contractile paralysis into adult Aedes aegypti resulting in 100% mortality after 24 hours. The sequence is that of U-theraphotoxin-Lk2a from Lasiodora klugi (Bahia scarlet tarantula).